The chain runs to 142 residues: DNA-directed RNA polymerase II subunit RPB4 (142 aa).

This sequence belongs to the eukaryotic RPB4 RNA polymerase subunit family. As to quaternary structure, component of the RNA polymerase II (Pol II) core complex consisting of 12 subunits: a ten-subunit catalytic core composed of POLR2A/RPB1, POLR2B/RPB2, POLR2C/RPB3, POLR2I/RPB9, POLR2J/RPB11, POLR2E/RPABC1, POLR2F/RPABC2, POLR2H/RPABC3, POLR2K/RPABC4 and POLR2L/RPABC5 and a mobile stalk composed of two subunits POLR2D/RPB4 and POLR2G/RPB7, protruding from the core and functioning primarily in transcription initiation. Part of Pol II(G) complex, in which Pol II core associates with an additional subunit POLR2M; unlike conventional Pol II, Pol II(G) functions as a transcriptional repressor. Part of TBP-based Pol II pre-initiation complex (PIC), in which Pol II core assembles with general transcription factors and other specific initiation factors including GTF2E1, GTF2E2, GTF2F1, GTF2F2, TCEA1, ERCC2, ERCC3, GTF2H2, GTF2H3, GTF2H4, GTF2H5, GTF2A1, GTF2A2, GTF2B and TBP; this large multi-subunit PIC complex mediates DNA unwinding and targets Pol II core to the transcription start site where the first phosphodiester bond forms.

The protein localises to the nucleus. Functionally, core component of RNA polymerase II (Pol II), a DNA-dependent RNA polymerase which synthesizes mRNA precursors and many functional non-coding RNAs using the four ribonucleoside triphosphates as substrates. Pol II is the central component of the basal RNA polymerase II transcription machinery. It is composed of mobile elements that move relative to each other. POLR2D/RPB4 is part of a subcomplex with POLR2G/RPB7 that binds to a pocket formed by POLR2A/RPB1, POLR2B/RPB2 and POLR2F/RPABC2 at the base of the clamp element. The POLR2D/RPB4-POLR2G/RPB7 subcomplex seems to lock the clamp via POLR2G/RPB7 in the closed conformation thus preventing double-stranded DNA to enter the active site cleft. The POLR2D/RPB4-POLR2G/RPB7 subcomplex binds single-stranded DNA and RNA. In Homo sapiens (Human), this protein is DNA-directed RNA polymerase II subunit RPB4 (POLR2D).